A 92-amino-acid polypeptide reads, in one-letter code: Small ribosomal subunit protein uS19 (92 aa).

It belongs to the universal ribosomal protein uS19 family.

Functionally, protein S19 forms a complex with S13 that binds strongly to the 16S ribosomal RNA. The sequence is that of Small ribosomal subunit protein uS19 (rpsS) from Geobacillus stearothermophilus (Bacillus stearothermophilus).